An 845-amino-acid polypeptide reads, in one-letter code: MKFFFIFFIFLFSFLIQSCYSDNTILRSQSLKDGDVIYSEGKRFAFGFFSLGNSKLRYVGIWYAQVSEQTIVWVANRDHPINDTSGLIKFSTRGNLCVYASGNGTEPIWSTDVIDMIQEPALVAKLSDLGNLVLLDPVTGKSFWESFNHPTNTLLPFMKFGFTRQSGVDRIMTSWRSPGDPGSGNITYRIERRGFPQMMMYKGLTLWWRTGSWTGQRWSGVPEMTNKFIFNISFVNNPDEVSITYGVLDASVTTRMVLNETGTLQRFRWNGRDKKWIGFWSAPEDKCDIYNHCGFNGYCDSTSTEKFECSCLPGYEPKTPRDWFLRDASDGCTRIKADSICNGKEGFAKLKRVKIPNTSAVNVDMNITLKECEQRCLKNCSCVAYASAYHESQDGAKGCLTWHGNMLDTRTYLSSGQDFYLRVDKSELARWNGNGASGKKRLVLILISLIAVVMLLLISFHCYLRKRRQRTQSNRLRKAPSSFAPSSFDLEDSFILEELEDKSRSRELPLFELSTIATATNNFAFQNKLGAGGFGPVYKGVLQNGMEIAVKRLSKSSGQGMEEFKNEVKLISKLQHRNLVRILGCCVEFEEKMLVYEYLPNKSLDYFIFHEEQRAELDWPKRMGIIRGIGRGILYLHQDSRLRIIHRDLKASNVLLDNEMIPKIADFGLARIFGGNQIEGSTNRVVGTYGYMSPEYAMDGQFSIKSDVYSFGVLILEIITGKRNSAFYEESLNLVKHIWDRWENGEAIEIIDKLMGEETYDEGEVMKCLHIGLLCVQENSSDRPDMSSVVFMLGHNAIDLPSPKHPAFTAGRRRNTKTGGSSDNWPSGETSSTINDVTLTDVQGR.

The first 21 residues, 1–21 (MKFFFIFFIFLFSFLIQSCYS), serve as a signal peptide directing secretion. One can recognise a Bulb-type lectin domain in the interval 22–147 (DNTILRSQSL…VTGKSFWESF (126 aa)). Over 22 to 441 (DNTILRSQSL…NGNGASGKKR (420 aa)) the chain is Extracellular. N-linked (GlcNAc...) asparagine glycosylation is found at asparagine 82, asparagine 103, asparagine 185, asparagine 231, and asparagine 259. Residues 283 to 321 (PEDKCDIYNHCGFNGYCDSTSTEKFECSCLPGYEPKTPR) form the EGF-like domain. Disulfide bonds link cysteine 287–cysteine 299 and cysteine 293–cysteine 309. The PAN domain maps to 341-424 (CNGKEGFAKL…SGQDFYLRVD (84 aa)). N-linked (GlcNAc...) asparagine glycans are attached at residues asparagine 357, asparagine 366, and asparagine 379. 2 disulfide bridges follow: cysteine 372/cysteine 399 and cysteine 376/cysteine 382. A helical transmembrane segment spans residues 442 to 462 (LVLILISLIAVVMLLLISFHC). Residues 463-845 (YLRKRRQRTQ…DVTLTDVQGR (383 aa)) are Cytoplasmic-facing. The Protein kinase domain occupies 523–808 (FAFQNKLGAG…DLPSPKHPAF (286 aa)). ATP contacts are provided by residues 529–537 (LGAGGFGPV) and lysine 551. Positions 612–629 (EQRAELDWPKRMGIIRGI) are caM-binding. Residue aspartate 648 is the Proton acceptor of the active site. The disordered stretch occupies residues 803 to 845 (PKHPAFTAGRRRNTKTGGSSDNWPSGETSSTINDVTLTDVQGR). Over residues 817–845 (KTGGSSDNWPSGETSSTINDVTLTDVQGR) the composition is skewed to polar residues.

This sequence belongs to the protein kinase superfamily. Ser/Thr protein kinase family.

It is found in the cell membrane. It catalyses the reaction L-seryl-[protein] + ATP = O-phospho-L-seryl-[protein] + ADP + H(+). The catalysed reaction is L-threonyl-[protein] + ATP = O-phospho-L-threonyl-[protein] + ADP + H(+). The sequence is that of G-type lectin S-receptor-like serine/threonine-protein kinase At1g11410 from Arabidopsis thaliana (Mouse-ear cress).